Reading from the N-terminus, the 1080-residue chain is DNA-directed RNA polymerase subunit beta C-terminal section (1080 aa).

It belongs to the RNA polymerase beta chain family. As to quaternary structure, in plastids the minimal PEP RNA polymerase catalytic core is composed of four subunits: alpha, beta, beta', and beta''. When a (nuclear-encoded) sigma factor is associated with the core the holoenzyme is formed, which can initiate transcription.

It localises to the plastid. The protein localises to the chloroplast. It catalyses the reaction RNA(n) + a ribonucleoside 5'-triphosphate = RNA(n+1) + diphosphate. DNA-dependent RNA polymerase catalyzes the transcription of DNA into RNA using the four ribonucleoside triphosphates as substrates. The sequence is that of DNA-directed RNA polymerase subunit beta C-terminal section (rpoB2) from Stigeoclonium helveticum (Green alga).